Consider the following 201-residue polypeptide: Large ribosomal subunit protein uL4 (201 aa).

The segment at 39-70 is disordered; that stretch reads GRQGTKAQKTRSEVSGGGKKPWRQKGTGRARA.

Belongs to the universal ribosomal protein uL4 family. In terms of assembly, part of the 50S ribosomal subunit.

One of the primary rRNA binding proteins, this protein initially binds near the 5'-end of the 23S rRNA. It is important during the early stages of 50S assembly. It makes multiple contacts with different domains of the 23S rRNA in the assembled 50S subunit and ribosome. In terms of biological role, forms part of the polypeptide exit tunnel. The protein is Large ribosomal subunit protein uL4 of Marinobacter nauticus (strain ATCC 700491 / DSM 11845 / VT8) (Marinobacter aquaeolei).